A 688-amino-acid chain; its full sequence is Potassium-transporting ATPase ATP-binding subunit (688 aa).

Helical transmembrane passes span 35 to 55 (VMFV…AMLA), 62 to 82 (ALFT…ANFA), 219 to 239 (IALT…CVTL), and 260 to 280 (VLIA…LSAI). The active-site 4-aspartylphosphate intermediate is aspartate 313. Residues aspartate 350, glutamate 354, 383–390 (FSAMTRMS), and lysine 401 contribute to the ATP site. Mg(2+)-binding residues include aspartate 524 and aspartate 528. 3 consecutive transmembrane segments (helical) span residues 594–614 (FAII…LNIM), 622–642 (AVLS…PLAL), and 667–687 (GLIA…LLIL).

It belongs to the cation transport ATPase (P-type) (TC 3.A.3) family. Type IA subfamily. The system is composed of three essential subunits: KdpA, KdpB and KdpC.

The protein localises to the cell inner membrane. The catalysed reaction is K(+)(out) + ATP + H2O = K(+)(in) + ADP + phosphate + H(+). Functionally, part of the high-affinity ATP-driven potassium transport (or Kdp) system, which catalyzes the hydrolysis of ATP coupled with the electrogenic transport of potassium into the cytoplasm. This subunit is responsible for energy coupling to the transport system and for the release of the potassium ions to the cytoplasm. The chain is Potassium-transporting ATPase ATP-binding subunit from Photorhabdus laumondii subsp. laumondii (strain DSM 15139 / CIP 105565 / TT01) (Photorhabdus luminescens subsp. laumondii).